The primary structure comprises 407 residues: 1-deoxy-D-xylulose 5-phosphate reductoisomerase (407 aa).

NADPH contacts are provided by Thr25, Gly26, Ser27, Ile28, Asn53, and Asn136. Lys137 is a 1-deoxy-D-xylulose 5-phosphate binding site. Glu138 contacts NADPH. Asp162 serves as a coordination point for Mn(2+). The 1-deoxy-D-xylulose 5-phosphate site is built by Ser163, Glu164, Ser188, and His211. A Mn(2+)-binding site is contributed by Glu164. Gly217 lines the NADPH pocket. The 1-deoxy-D-xylulose 5-phosphate site is built by Ser224, Asn229, Lys230, and Glu233. Glu233 provides a ligand contact to Mn(2+).

This sequence belongs to the DXR family. It depends on Mg(2+) as a cofactor. Requires Mn(2+) as cofactor.

The enzyme catalyses 2-C-methyl-D-erythritol 4-phosphate + NADP(+) = 1-deoxy-D-xylulose 5-phosphate + NADPH + H(+). The protein operates within isoprenoid biosynthesis; isopentenyl diphosphate biosynthesis via DXP pathway; isopentenyl diphosphate from 1-deoxy-D-xylulose 5-phosphate: step 1/6. In terms of biological role, catalyzes the NADPH-dependent rearrangement and reduction of 1-deoxy-D-xylulose-5-phosphate (DXP) to 2-C-methyl-D-erythritol 4-phosphate (MEP). The polypeptide is 1-deoxy-D-xylulose 5-phosphate reductoisomerase (Bradyrhizobium diazoefficiens (strain JCM 10833 / BCRC 13528 / IAM 13628 / NBRC 14792 / USDA 110)).